The sequence spans 253 residues: Tryptophan synthase alpha chain (253 aa).

Active-site proton acceptor residues include Glu-47 and Asp-58.

Belongs to the TrpA family. As to quaternary structure, tetramer of two alpha and two beta chains.

The enzyme catalyses (1S,2R)-1-C-(indol-3-yl)glycerol 3-phosphate + L-serine = D-glyceraldehyde 3-phosphate + L-tryptophan + H2O. It participates in amino-acid biosynthesis; L-tryptophan biosynthesis; L-tryptophan from chorismate: step 5/5. The alpha subunit is responsible for the aldol cleavage of indoleglycerol phosphate to indole and glyceraldehyde 3-phosphate. The sequence is that of Tryptophan synthase alpha chain from Syntrophotalea carbinolica (strain DSM 2380 / NBRC 103641 / GraBd1) (Pelobacter carbinolicus).